The chain runs to 418 residues: Putative competence-damage inducible protein (418 aa).

This sequence belongs to the CinA family.

This Clostridioides difficile (strain 630) (Peptoclostridium difficile) protein is Putative competence-damage inducible protein.